A 372-amino-acid polypeptide reads, in one-letter code: Protein Wnt-1 (372 aa).

An N-terminal signal peptide occupies residues 1-29 (MLKSTQVILIFILLISIVESLSWLALGLA). Disulfide bonds link C77–C88, C130–C138, and C140–C158. N87 is a glycosylation site (N-linked (GlcNAc...) asparagine). N187 carries N-linked (GlcNAc...) asparagine glycosylation. Cystine bridges form between C225–C239, C227–C234, C301–C332, C317–C327, C331–C371, C347–C362, C349–C359, and C354–C355. Residue S231 is the site of O-palmitoleoyl serine; by mom-1 attachment.

This sequence belongs to the Wnt family. Palmitoleoylation is required for efficient binding to frizzled receptors. Depalmitoleoylation leads to Wnt signaling pathway inhibition. In terms of tissue distribution, expressed in intestine, some head neurons and ventral nerve cord and pharyngeal neurons. Expressed in the tail and weakly expressed in the vulva and body wall muscles. Expressed highly in posterior dorsal and ventral muscle cells.

Its subcellular location is the secreted. It is found in the extracellular space. The protein localises to the extracellular matrix. It localises to the cytoplasm. The protein resides in the cell membrane. Its function is as follows. Ligand for members of the frizzled family of seven transmembrane receptors. Probable developmental protein. May be a signaling molecule which affects the development of discrete regions of tissues. Is likely to signal over only few cell diameters. Binds receptor tyrosine kinase cam-1. Together with Wnt ligand cwn-2, regulates the migration of CAN, ALM, BDU and HSN neurons during embryogenesis, the migration of QL and QR neuroblast descendants during larval development, and polarity of ALM neurons. Also acts with the Wnt ligand egl-20 to direct HSN neuron migration. Acts through the Wnt receptor cfz-2 to direct ALM migration. Also plays a role in axon growth and guidance in HSN and male CP neurons. In addition, together with Wnt ligand cwn-2, negatively regulates developmental neurite pruning of AIM neurons probably by acting as a ligand for receptor tyrosine kinase cam-1. Probably by activating the Wnt/Frizzled pathway, may regulate vulva development. May act redundantly with other Wnt ligands such as cwn-2 and mom-2 to control seam cell polarity. The protein is Protein Wnt-1 (cwn-1) of Caenorhabditis elegans.